A 123-amino-acid chain; its full sequence is MASSFSRWLVDPKKNPLAAIHMKTLSSRLRNYGLRHDDLYDPMYDLDVKEALNRLPREIVDARNQRLLRAMDLSMKHQYLPEDLQAMQTPFRNYLQEMLALVKRESAEREALGALPLYQRTLP.

The protein belongs to the UQCRB/QCR7 family. Component of the ubiquinol-cytochrome c oxidoreductase (cytochrome b-c1 complex, complex III, CIII), a multisubunit enzyme composed of 3 respiratory subunits cytochrome b, cytochrome c1 and Rieske protein, 2 core protein subunits, and additional low-molecular weight protein subunits. The complex exists as an obligatory dimer and forms supercomplexes (SCs) in the inner mitochondrial membrane with cytochrome c oxidase (complex IV, CIV). Post-translationally, the N-terminus is blocked.

The protein resides in the mitochondrion inner membrane. In terms of biological role, component of the ubiquinol-cytochrome c oxidoreductase, a multisubunit transmembrane complex that is part of the mitochondrial electron transport chain which drives oxidative phosphorylation. The respiratory chain contains 3 multisubunit complexes succinate dehydrogenase (complex II, CII), ubiquinol-cytochrome c oxidoreductase (cytochrome b-c1 complex, complex III, CIII) and cytochrome c oxidase (complex IV, CIV), that cooperate to transfer electrons derived from NADH and succinate to molecular oxygen, creating an electrochemical gradient over the inner membrane that drives transmembrane transport and the ATP synthase. The cytochrome b-c1 complex catalyzes electron transfer from ubiquinol to cytochrome c, linking this redox reaction to translocation of protons across the mitochondrial inner membrane, with protons being carried across the membrane as hydrogens on the quinol. In the process called Q cycle, 2 protons are consumed from the matrix, 4 protons are released into the intermembrane space and 2 electrons are passed to cytochrome c. The protein is Cytochrome b-c1 complex subunit 7 of Solanum tuberosum (Potato).